Consider the following 169-residue polypeptide: Transcription antitermination protein NusB (169 aa).

Positions Met1–Arg23 are disordered.

It belongs to the NusB family.

Involved in transcription antitermination. Required for transcription of ribosomal RNA (rRNA) genes. Binds specifically to the boxA antiterminator sequence of the ribosomal RNA (rrn) operons. This chain is Transcription antitermination protein NusB, found in Rhodopseudomonas palustris (strain HaA2).